Consider the following 414-residue polypeptide: MAALFVSLLALTSLVPVQGAATVPQTDYAKRAERVLRSAPLIDGHNDLPYAIRRSTNDQIYDGKLPFETSLKGHTDLPRMRKGRMGGQFWSVFIACPSDPNAPINTPKFATRDTLEQIDVARRLVDKYSKDLMYCDNPGCAKRAFREGKIGSFIGIEGGHQVGSSIAALRQAFYAGARYMTLTHNCDNAWATAASTVRAGKPDLGMTDFGPALIKEMNRLGMLVDLSHVSHQTMRDVLKITKAPVIFSHSSAYEVSKHLRNVPDDVLKTVAKNNGVVMVTFVSSFVKVDDPDSADVNTVVKHIFHIAEVAGWDHVGLGGDYDGTTELPKGLEDVSKYPYLIEKVLEAGATEEQARKLVGENVLRVWTEVEQIAKKIQRSGVLPVEEVWKGRNGTALSERSTFIEGPAPLEYGCD.

A signal peptide spans 1 to 20 (MAALFVSLLALTSLVPVQGA). 3 residues coordinate Zn(2+): His45, Asp47, and Glu157. Cys96 and Cys186 are disulfide-bonded. Residue His184 participates in substrate binding. Zn(2+) is bound by residues His228 and His249. Arg260 and Asp320 together coordinate substrate. Asn392 carries an N-linked (GlcNAc...) asparagine glycan.

This sequence belongs to the metallo-dependent hydrolases superfamily. Peptidase M19 family. Zn(2+) serves as cofactor.

It catalyses the reaction an L-aminoacyl-L-amino acid + H2O = 2 an L-alpha-amino acid. In terms of biological role, hydrolyzes a wide range of dipeptides. The protein is Putative dipeptidase ARB_02715 of Arthroderma benhamiae (strain ATCC MYA-4681 / CBS 112371) (Trichophyton mentagrophytes).